A 272-amino-acid chain; its full sequence is Shikimate dehydrogenase (NADP(+)) (272 aa).

Shikimate contacts are provided by residues 14 to 16 (SKS) and Thr61. Lys65 (proton acceptor) is an active-site residue. Glu77 is a binding site for NADP(+). Asn86 and Asp102 together coordinate shikimate. NADP(+)-binding positions include 126–130 (GAGGA), 149–154 (NRTASR), and Met213. Tyr215 serves as a coordination point for shikimate. Gly237 provides a ligand contact to NADP(+).

Belongs to the shikimate dehydrogenase family. As to quaternary structure, homodimer.

The catalysed reaction is shikimate + NADP(+) = 3-dehydroshikimate + NADPH + H(+). Its pathway is metabolic intermediate biosynthesis; chorismate biosynthesis; chorismate from D-erythrose 4-phosphate and phosphoenolpyruvate: step 4/7. Functionally, involved in the biosynthesis of the chorismate, which leads to the biosynthesis of aromatic amino acids. Catalyzes the reversible NADPH linked reduction of 3-dehydroshikimate (DHSA) to yield shikimate (SA). In Salmonella paratyphi A (strain ATCC 9150 / SARB42), this protein is Shikimate dehydrogenase (NADP(+)).